We begin with the raw amino-acid sequence, 409 residues long: LL-diaminopimelate aminotransferase (409 aa).

Tyrosine 15 and glycine 42 together coordinate substrate. Residues tyrosine 72, 108-109 (SK), tyrosine 132, asparagine 187, tyrosine 218, and 246-248 (SFS) contribute to the pyridoxal 5'-phosphate site. The substrate site is built by lysine 109, tyrosine 132, and asparagine 187. At lysine 249 the chain carries N6-(pyridoxal phosphate)lysine. Residues arginine 257 and asparagine 292 each contribute to the pyridoxal 5'-phosphate site. Substrate contacts are provided by asparagine 292 and arginine 388.

It belongs to the class-I pyridoxal-phosphate-dependent aminotransferase family. LL-diaminopimelate aminotransferase subfamily. Homodimer. Pyridoxal 5'-phosphate is required as a cofactor.

The catalysed reaction is (2S,6S)-2,6-diaminopimelate + 2-oxoglutarate = (S)-2,3,4,5-tetrahydrodipicolinate + L-glutamate + H2O + H(+). Its pathway is amino-acid biosynthesis; L-lysine biosynthesis via DAP pathway; LL-2,6-diaminopimelate from (S)-tetrahydrodipicolinate (aminotransferase route): step 1/1. Involved in the synthesis of meso-diaminopimelate (m-DAP or DL-DAP), required for both lysine and peptidoglycan biosynthesis. Catalyzes the direct conversion of tetrahydrodipicolinate to LL-diaminopimelate. This is LL-diaminopimelate aminotransferase from Heliobacterium modesticaldum (strain ATCC 51547 / Ice1).